A 354-amino-acid polypeptide reads, in one-letter code: DNA integrity scanning protein DisA (354 aa).

Residues 6-144 (EKELKSILKL…GHIKYVLRDS (139 aa)) form the DAC domain. ATP is bound by residues glycine 73, leucine 91, and 104–108 (TRHRT).

It belongs to the DisA family. As to quaternary structure, homooctamer. Mg(2+) is required as a cofactor.

It carries out the reaction 2 ATP = 3',3'-c-di-AMP + 2 diphosphate. Its function is as follows. Participates in a DNA-damage check-point that is active prior to asymmetric division when DNA is damaged. DisA forms globular foci that rapidly scan along the chromosomes during sporulation, searching for lesions. When a lesion is present, DisA pauses at the lesion site. This triggers a cellular response that culminates in a temporary block in sporulation initiation. Also has diadenylate cyclase activity, catalyzing the condensation of 2 ATP molecules into cyclic di-AMP (c-di-AMP). c-di-AMP acts as a signaling molecule that couples DNA integrity with progression of sporulation. The rise in c-di-AMP level generated by DisA while scanning the chromosome, operates as a positive signal that advances sporulation; upon encountering a lesion, the DisA focus arrests at the damaged site and halts c-di-AMP synthesis. This chain is DNA integrity scanning protein DisA, found in Clostridium kluyveri (strain ATCC 8527 / DSM 555 / NBRC 12016 / NCIMB 10680 / K1).